Consider the following 219-residue polypeptide: ATP-dependent Clp protease proteolytic subunit 4 (219 aa).

Residue S125 is the Nucleophile of the active site. Residue H150 is part of the active site.

This sequence belongs to the peptidase S14 family. In terms of assembly, fourteen ClpP subunits assemble into 2 heptameric rings which stack back to back to give a disk-like structure with a central cavity, resembling the structure of eukaryotic proteasomes.

It localises to the cytoplasm. The enzyme catalyses Hydrolysis of proteins to small peptides in the presence of ATP and magnesium. alpha-casein is the usual test substrate. In the absence of ATP, only oligopeptides shorter than five residues are hydrolyzed (such as succinyl-Leu-Tyr-|-NHMec, and Leu-Tyr-Leu-|-Tyr-Trp, in which cleavage of the -Tyr-|-Leu- and -Tyr-|-Trp bonds also occurs).. In terms of biological role, cleaves peptides in various proteins in a process that requires ATP hydrolysis. Has a chymotrypsin-like activity. Plays a major role in the degradation of misfolded proteins. The sequence is that of ATP-dependent Clp protease proteolytic subunit 4 from Prochlorococcus marinus (strain MIT 9312).